The following is a 541-amino-acid chain: NAD(P)H-quinone oxidoreductase subunit 2 A, chloroplastic (541 aa).

14 helical membrane-spanning segments follow: residues 24–44, 57–77, 99–119, 124–144, 149–169, 183–203, 227–247, 289–309, 326–346, 354–374, 385–405, 426–446, 449–469, and 515–535; these read LLLF…GLIL, IPWL…ALLF, IFQF…VEYI, MAIT…MFLC, FITI…LSGY, YLLM…WLYG, PGIS…LSPA, ILSP…AASA, WHLL…LIAI, MLAY…IVGD, YMLF…LFGL, ALSL…AGFF, LYLF…IGLL, and MIVC…IIAI.

This sequence belongs to the complex I subunit 2 family. As to quaternary structure, NDH is composed of at least 16 different subunits, 5 of which are encoded in the nucleus.

It localises to the plastid. The protein resides in the chloroplast thylakoid membrane. The enzyme catalyses a plastoquinone + NADH + (n+1) H(+)(in) = a plastoquinol + NAD(+) + n H(+)(out). The catalysed reaction is a plastoquinone + NADPH + (n+1) H(+)(in) = a plastoquinol + NADP(+) + n H(+)(out). Functionally, NDH shuttles electrons from NAD(P)H:plastoquinone, via FMN and iron-sulfur (Fe-S) centers, to quinones in the photosynthetic chain and possibly in a chloroplast respiratory chain. The immediate electron acceptor for the enzyme in this species is believed to be plastoquinone. Couples the redox reaction to proton translocation, and thus conserves the redox energy in a proton gradient. The protein is NAD(P)H-quinone oxidoreductase subunit 2 A, chloroplastic of Coffea arabica (Arabian coffee).